Here is a 142-residue protein sequence, read N- to C-terminus: Large ribosomal subunit protein uL13 (142 aa).

This sequence belongs to the universal ribosomal protein uL13 family. Part of the 50S ribosomal subunit.

In terms of biological role, this protein is one of the early assembly proteins of the 50S ribosomal subunit, although it is not seen to bind rRNA by itself. It is important during the early stages of 50S assembly. The chain is Large ribosomal subunit protein uL13 from Actinobacillus pleuropneumoniae serotype 5b (strain L20).